A 520-amino-acid polypeptide reads, in one-letter code: Peptide chain release factor 3 (520 aa).

The tr-type G domain maps to 8-277; the sequence is ESRKTFAIIS…FAPMPNARQT (270 aa). GTP contacts are provided by residues 17 to 24, 85 to 89, and 139 to 142; these read SHPDAGKT, DTPGH, and NKLD.

It belongs to the TRAFAC class translation factor GTPase superfamily. Classic translation factor GTPase family. PrfC subfamily.

It localises to the cytoplasm. In terms of biological role, increases the formation of ribosomal termination complexes and stimulates activities of RF-1 and RF-2. It binds guanine nucleotides and has strong preference for UGA stop codons. It may interact directly with the ribosome. The stimulation of RF-1 and RF-2 is significantly reduced by GTP and GDP, but not by GMP. The sequence is that of Peptide chain release factor 3 from Staphylococcus aureus (strain JH1).